The primary structure comprises 202 residues: Holliday junction branch migration complex subunit RuvA (202 aa).

Residues 1-64 are domain I; sequence MFAYIRGRLE…EDVISLYGFL (64 aa). Positions 65–143 are domain II; it reads TQEELNVFEL…KEQLTEYAQS (79 aa). The segment at 144-152 is flexible linker; sequence EEGGKVLDT. The interval 152-202 is domain III; that stretch reads TDSSKMAEAVSALMVLGYSPAEANKAVSAVYREDMDIETIIKNALKGLARP.

It belongs to the RuvA family. Homotetramer. Forms an RuvA(8)-RuvB(12)-Holliday junction (HJ) complex. HJ DNA is sandwiched between 2 RuvA tetramers; dsDNA enters through RuvA and exits via RuvB. An RuvB hexamer assembles on each DNA strand where it exits the tetramer. Each RuvB hexamer is contacted by two RuvA subunits (via domain III) on 2 adjacent RuvB subunits; this complex drives branch migration. In the full resolvosome a probable DNA-RuvA(4)-RuvB(12)-RuvC(2) complex forms which resolves the HJ.

The protein localises to the cytoplasm. In terms of biological role, the RuvA-RuvB-RuvC complex processes Holliday junction (HJ) DNA during genetic recombination and DNA repair, while the RuvA-RuvB complex plays an important role in the rescue of blocked DNA replication forks via replication fork reversal (RFR). RuvA specifically binds to HJ cruciform DNA, conferring on it an open structure. The RuvB hexamer acts as an ATP-dependent pump, pulling dsDNA into and through the RuvAB complex. HJ branch migration allows RuvC to scan DNA until it finds its consensus sequence, where it cleaves and resolves the cruciform DNA. The chain is Holliday junction branch migration complex subunit RuvA from Acetivibrio thermocellus (strain ATCC 27405 / DSM 1237 / JCM 9322 / NBRC 103400 / NCIMB 10682 / NRRL B-4536 / VPI 7372) (Clostridium thermocellum).